Here is a 1021-residue protein sequence, read N- to C-terminus: MSSDIRKWFMKAQDKNGGAAKPAGTTALAKKPVLSIPEKPSAAPSMAACDQDCSARRKTSKYFASKTEKEEDTSAGKGTGRGLPKRKLQKVSDELEDDMKPLPAKEVHKEEEDDDDDDFVAPSKRKTPVKPPPSKKLKGASTAEAHGKTGLDDDNEDKMDEDAKTPSKASGSGRGRGRGRGRGGRGAGAAHGKTIGLDDDGEEDKMDEDAKTPSKAAGRGRGGASGGRGRGGGGRGFMNFGERKDPPHKGEKEVPEGAPDCLTGLTFVISGTLDSLEREEATDLIKRYGGRVTGSISKKTNYLLADEDVGGVKSNKAKELGVPFLTEDGLFDMIRKSKPAKATVAKHQSDKNSEKQQKSPMKSSPVKVERRDGNQITTGKNISPKSNKGSASIDNQKVNIVDRGSLQWTEKYRPKVPNDIVGNQSMVKQLHDWLRSWEDQFLHSGQKGKGKKQADSGAKKAVLLSGPPGIGKTTTAKVVSQMLGLQAIEVNASDSRGKADSKIEKGVGGSTSNSIKELISNATLNYSNNRLKRPKAVLVMDEVDGMSAGDRGGVADLIASIKMSKIPIICICNDRYSQKLKSLVNYCLLLNFRKPTKQQMGKRLMEIAKKEGLQAQENAMEELAERVHGDIRMALNHLQYMSLSQSVVKYDDIRQRLNSSTKDEDISPFTAVDKLFGFNGGRLRMDERIDLSMSDPDLVPLIIQENYINYRPITVGKDDSGVKRMNFLARAAESIADADIVNVQIRRYRQWQLSQAACLSSSIVPAALMHGNREILEAGERNFNRFGGWLGKYSTTNKNIRLLEDAHSHILASQQANLDRESLRLDYLTLLLRQLTDPLKTMPKDEAVQKVVEFMDTYSLSQEDFDTIVELSKFKGHPNPMDGIQPAVKSALTKAYKQGSSSRVVRAADLVNIPGMKKPLKKRVAAILEPVGESLPEENGVASSEGDEEDSSDAENNDELVPGDTKPKLDLQSDKKKGIQVQLDLKSNGNGLNSKKMPAGRSKASGSAGKAAGGSGGKRKR.

Disordered regions lie at residues 1–259 and 339–392; these read MSSD…EGAP and PAKA…GSAS. Over residues 90–110 the composition is skewed to basic and acidic residues; it reads KVSDELEDDMKPLPAKEVHKE. A compositionally biased stretch (basic residues) spans 123-138; sequence SKRKTPVKPPPSKKLK. A compositionally biased stretch (acidic residues) spans 197–207; that stretch reads LDDDGEEDKMD. Residues 219–236 are compositionally biased toward gly residues; sequence RGRGGASGGRGRGGGGRG. Composition is skewed to basic and acidic residues over residues 241–255 and 347–357; these read GERK…KEVP and HQSDKNSEKQQ. The region spanning 257-347 is the BRCT domain; that stretch reads GAPDCLTGLT…KPAKATVAKH (91 aa). Over residues 374–392 the composition is skewed to polar residues; the sequence is NQITTGKNISPKSNKGSAS. 465-472 contacts ATP; the sequence is SGPPGIGK. The disordered stretch occupies residues 931 to 1021; it reads VGESLPEENG…AGGSGGKRKR (91 aa). Positions 945-958 are enriched in acidic residues; the sequence is EGDEEDSSDAENND. Basic and acidic residues predominate over residues 965 to 977; it reads TKPKLDLQSDKKK. Residues 999–1010 show a composition bias toward low complexity; it reads AGRSKASGSAGK. Residues 1011–1021 are compositionally biased toward gly residues; it reads AAGGSGGKRKR.

This sequence belongs to the activator 1 large subunit family. Heterotetramer of subunits RFC2, RFC3, RFC4 and RFC5 that can form a complex with RFC1. In terms of tissue distribution, expressed in roots, leaves, shoot apical meristem (SAM), flag leaves and panicles.

It is found in the nucleus. In terms of biological role, may be involved in DNA replication and thus regulate cell proliferation. The sequence is that of Replication factor C subunit 1 (RFC1) from Oryza sativa subsp. japonica (Rice).